We begin with the raw amino-acid sequence, 249 residues long: uncharacterized protein (249 aa).

Polar residues-rich tracts occupy residues 66 to 79 and 92 to 119; these read NASLESGQSSTISP and ASGSVSANKTFQSTESSALHQPKSSSSE. Residues 66–142 are disordered; that stretch reads NASLESGQSS…GPTSPRVTPG (77 aa).

The protein localises to the plastid. Its subcellular location is the chloroplast. This is an uncharacterized protein from Chlorella vulgaris (Green alga).